Consider the following 116-residue polypeptide: MTRVSLLWAVVVSTCLESGMAQTVTQSQPEMSVQEAETVTLSCTYDTSENNYYLFWYKQPPSRQMILVIRQEAYKQQNATENRFSVNFQKAAKSFSLKISDSQLGDTAMYFCAFMK.

The N-terminal stretch at 1–21 (MTRVSLLWAVVVSTCLESGMA) is a signal peptide. Positions 22 to 116 (QTVTQSQPEM…TAMYFCAFMK (95 aa)) constitute an Ig-like domain. A disulfide bond links Cys43 and Cys112. N-linked (GlcNAc...) asparagine glycosylation occurs at Asn78.

As to quaternary structure, alpha-beta TR is a heterodimer composed of an alpha and beta chain; disulfide-linked. The alpha-beta TR is associated with the transmembrane signaling CD3 coreceptor proteins to form the TR-CD3 (TcR or TCR). The assembly of alpha-beta TR heterodimers with CD3 occurs in the endoplasmic reticulum where a single alpha-beta TR heterodimer associates with one CD3D-CD3E heterodimer, one CD3G-CD3E heterodimer and one CD247 homodimer forming a stable octameric structure. CD3D-CD3E and CD3G-CD3E heterodimers preferentially associate with TR alpha and TR beta chains, respectively. The association of the CD247 homodimer is the last step of TcR assembly in the endoplasmic reticulum and is required for transport to the cell surface.

The protein resides in the cell membrane. Its function is as follows. V region of the variable domain of T cell receptor (TR) alpha chain that participates in the antigen recognition. Alpha-beta T cell receptors are antigen specific receptors which are essential to the immune response and are present on the cell surface of T lymphocytes. Recognize peptide-major histocompatibility (MH) (pMH) complexes that are displayed by antigen presenting cells (APC), a prerequisite for efficient T cell adaptive immunity against pathogens. Binding of alpha-beta TR to pMH complex initiates TR-CD3 clustering on the cell surface and intracellular activation of LCK that phosphorylates the ITAM motifs of CD3G, CD3D, CD3E and CD247 enabling the recruitment of ZAP70. In turn ZAP70 phosphorylates LAT, which recruits numerous signaling molecules to form the LAT signalosome. The LAT signalosome propagates signal branching to three major signaling pathways, the calcium, the mitogen-activated protein kinase (MAPK) kinase and the nuclear factor NF-kappa-B (NF-kB) pathways, leading to the mobilization of transcription factors that are critical for gene expression and essential for T cell growth and differentiation. The T cell repertoire is generated in the thymus, by V-(D)-J rearrangement. This repertoire is then shaped by intrathymic selection events to generate a peripheral T cell pool of self-MH restricted, non-autoaggressive T cells. Post-thymic interaction of alpha-beta TR with the pMH complexes shapes TR structural and functional avidity. This Homo sapiens (Human) protein is T cell receptor alpha variable 38-1.